A 339-amino-acid chain; its full sequence is Protein-lysine N-methyltransferase EFM3 (339 aa).

S-adenosyl-L-methionine-binding positions include Trp-137 and 174–176 (GAG). Thr-177 is subject to Phosphothreonine. Positions 199, 233, and 248 each coordinate S-adenosyl-L-methionine.

The protein belongs to the class I-like SAM-binding methyltransferase superfamily. EEF2KMT family.

The protein resides in the cytoplasm. S-adenosyl-L-methionine-dependent protein-lysine N-methyltransferase that mono-, di- and trimethylates elongation factor 2 (EFT1/EFT2) at 'Lys-509'. This is Protein-lysine N-methyltransferase EFM3 from Saccharomyces cerevisiae (strain ATCC 204508 / S288c) (Baker's yeast).